Consider the following 143-residue polypeptide: Heat shock protein Hsp-16.48/Hsp-16.49 (143 aa).

One can recognise a sHSP domain in the interval 35 to 140; sequence HNSFNFSDNI…SSRSIPINFV (106 aa).

It belongs to the small heat shock protein (HSP20) family.

The protein is Heat shock protein Hsp-16.48/Hsp-16.49 (hsp-16.48) of Caenorhabditis elegans.